Here is a 554-residue protein sequence, read N- to C-terminus: 7-epi-sesquithujene synthase (554 aa).

The Mg(2+) site is built by Asp308 and Asp312. Residues Asp308, Asp312, Arg449, and Asn452 each contribute to the substrate site. A DDXXD motif motif is present at residues 308–312 (DDMFD). 3 residues coordinate Mg(2+): Asn452, Ser456, and Glu460.

Belongs to the terpene synthase family. In terms of assembly, monomer. The cofactor is Mg(2+). Requires Mn(2+) as cofactor. Highly expressed in the husk. Detected in leaf sheaths and leaves.

It is found in the cytoplasm. It carries out the reaction (2E,6E)-farnesyl diphosphate = 7-epi-sesquithujene + diphosphate. It catalyses the reaction (2E,6E)-farnesyl diphosphate = (1S,5S,6R)-alpha-bergamotene + diphosphate. The enzyme catalyses (2E,6E)-farnesyl diphosphate = (E)-beta-farnesene + diphosphate. The catalysed reaction is (2E,6E)-farnesyl diphosphate = (S)-beta-bisabolene + diphosphate. It carries out the reaction (2Z,6E)-farnesyl diphosphate = (-)-beta-curcumene + diphosphate. It catalyses the reaction (2E,6E)-farnesyl diphosphate = gamma-curcumene + diphosphate. The enzyme catalyses (2E,6E)-farnesyl diphosphate = sesquisabinene A + diphosphate. The protein operates within secondary metabolite biosynthesis; terpenoid biosynthesis. Sesquiterpene synthase involved in the production after herbivore attack of a blend of volatiles that attracts natural enemies of herbivores. Converts farnesyl diphosphate to (S)-beta-bisabolene and 7-epi-sesquithujene, along with a mixture of more than 20 other minor sesquiterpene olefins. Can also act in vitro as a monoterpene synthase, converting geranyl diphosphate to (S)-(-)-limonene, beta-myrcene and 11 other monoterpenes. The chain is 7-epi-sesquithujene synthase from Zea mays (Maize).